Consider the following 181-residue polypeptide: ATP-dependent protease subunit HslV (181 aa).

T7 is a catalytic residue. Na(+) contacts are provided by G166, C169, and T172.

It belongs to the peptidase T1B family. HslV subfamily. As to quaternary structure, a double ring-shaped homohexamer of HslV is capped on each side by a ring-shaped HslU homohexamer. The assembly of the HslU/HslV complex is dependent on binding of ATP.

It localises to the cytoplasm. The enzyme catalyses ATP-dependent cleavage of peptide bonds with broad specificity.. Allosterically activated by HslU binding. In terms of biological role, protease subunit of a proteasome-like degradation complex believed to be a general protein degrading machinery. The chain is ATP-dependent protease subunit HslV from Acidovorax ebreus (strain TPSY) (Diaphorobacter sp. (strain TPSY)).